Consider the following 336-residue polypeptide: Ornithine carbamoyltransferase, catabolic (336 aa).

Carbamoyl phosphate-binding positions include 57–60 (STRT), glutamine 84, arginine 108, and 135–138 (HPTQ). Residues asparagine 168, aspartate 232, and 236–237 (SM) contribute to the L-ornithine site. Residues 274–275 (CL) and arginine 321 each bind carbamoyl phosphate.

This sequence belongs to the aspartate/ornithine carbamoyltransferase superfamily. OTCase family.

Its subcellular location is the cytoplasm. It catalyses the reaction carbamoyl phosphate + L-ornithine = L-citrulline + phosphate + H(+). It functions in the pathway amino-acid degradation; L-arginine degradation via ADI pathway; carbamoyl phosphate from L-arginine: step 2/2. Reversibly catalyzes the transfer of the carbamoyl group from carbamoyl phosphate (CP) to the N(epsilon) atom of ornithine (ORN) to produce L-citrulline. This Pseudomonas putida (strain ATCC 47054 / DSM 6125 / CFBP 8728 / NCIMB 11950 / KT2440) protein is Ornithine carbamoyltransferase, catabolic (arcB).